The chain runs to 257 residues: Phosphate import ATP-binding protein PstB (257 aa).

Positions 11–252 (IQVRDLNFYY…PAKKQTEDYI (242 aa)) constitute an ABC transporter domain. 43 to 50 (GPSGCGKS) contributes to the ATP binding site.

This sequence belongs to the ABC transporter superfamily. Phosphate importer (TC 3.A.1.7) family. The complex is composed of two ATP-binding proteins (PstB), two transmembrane proteins (PstC and PstA) and a solute-binding protein (PstS).

Its subcellular location is the cell inner membrane. It carries out the reaction phosphate(out) + ATP + H2O = ADP + 2 phosphate(in) + H(+). In terms of biological role, part of the ABC transporter complex PstSACB involved in phosphate import. Responsible for energy coupling to the transport system. This chain is Phosphate import ATP-binding protein PstB, found in Enterobacter cloacae.